The sequence spans 103 residues: Acylphosphatase-2 (103 aa).

S2 bears the N-acetylserine mark. The 91-residue stretch at S13–Y103 folds into the Acylphosphatase-like domain. S-glutathionyl cysteine; alternate is present on C26. Active-site residues include R28 and N46.

The protein belongs to the acylphosphatase family. As to quaternary structure, monomer (TU1) or homodimer (TU3) in absence of reducing factors; disulfide linked.

The catalysed reaction is an acyl phosphate + H2O = a carboxylate + phosphate + H(+). In terms of biological role, its physiological role is not yet clear. The polypeptide is Acylphosphatase-2 (ACYP2) (Meleagris gallopavo (Wild turkey)).